A 753-amino-acid polypeptide reads, in one-letter code: 5-methyltetrahydropteroyltriglutamate--homocysteine methyltransferase (753 aa).

5-methyltetrahydropteroyltri-L-glutamate is bound by residues 17 to 20 and Lys117; that span reads RELK. L-homocysteine contacts are provided by residues 431–433 and Glu484; that span reads IGS. Residues 431–433 and Glu484 each bind L-methionine; that span reads IGS. Residues 515–516 and Trp561 each bind 5-methyltetrahydropteroyltri-L-glutamate; that span reads RC. Asp599 provides a ligand contact to L-homocysteine. Asp599 lines the L-methionine pocket. Glu605 is a binding site for 5-methyltetrahydropteroyltri-L-glutamate. The Zn(2+) site is built by His641, Cys643, and Glu665. Residue His694 is the Proton donor of the active site. Cys726 contributes to the Zn(2+) binding site.

It belongs to the vitamin-B12 independent methionine synthase family. The cofactor is Zn(2+).

It carries out the reaction 5-methyltetrahydropteroyltri-L-glutamate + L-homocysteine = tetrahydropteroyltri-L-glutamate + L-methionine. It participates in amino-acid biosynthesis; L-methionine biosynthesis via de novo pathway; L-methionine from L-homocysteine (MetE route): step 1/1. Catalyzes the transfer of a methyl group from 5-methyltetrahydrofolate to homocysteine resulting in methionine formation. This is 5-methyltetrahydropteroyltriglutamate--homocysteine methyltransferase from Shigella boydii serotype 4 (strain Sb227).